Here is a 387-residue protein sequence, read N- to C-terminus: MDLYEYQARDLFEKYGVPVLPGIVADTPEEVRAAAEKLGGVNVVKAQVKTGGRGKVGGVKVAKNPDEAEEAAKAILGLDIKGHVVRRVMVSGGARIAREFYFSVLLDRANRSYLSLTSVEGGMEIEQLAVEKPEALARIGVDPIAGVDTTKATEIARAAGFPEELVSKVADVFVKLYDVYKGEDATLVEVNPLVLTEEGEVIALDGKVTLDENAGFRHPEHEELEDKAAADPLEAKAKEADLNYVKLDGQVGIIGNGAGLVMSTLDVVAYAGERHKGVKPANFLDIGGGASAEVMAAGLDVILNDPQVKSVFVNVFGGITACDAVANGIVKALEILGGDANKPLVVRLDGNNVEEGRRILTDANHPLVTLALTMDEGADKAAELAAK.

Residues 9–236 (RDLFEKYGVP…KAAADPLEAK (228 aa)) enclose the ATP-grasp domain. ATP contacts are provided by residues lysine 45, 52-54 (GRG), alanine 94, and glutamate 99. Residues asparagine 191 and aspartate 205 each contribute to the Mg(2+) site. Substrate is bound by residues asparagine 256 and 318–320 (GIT).

The protein belongs to the succinate/malate CoA ligase beta subunit family. In terms of assembly, heterotetramer of two alpha and two beta subunits. Requires Mg(2+) as cofactor.

It catalyses the reaction succinate + ATP + CoA = succinyl-CoA + ADP + phosphate. The catalysed reaction is GTP + succinate + CoA = succinyl-CoA + GDP + phosphate. It participates in carbohydrate metabolism; tricarboxylic acid cycle; succinate from succinyl-CoA (ligase route): step 1/1. In terms of biological role, succinyl-CoA synthetase functions in the citric acid cycle (TCA), coupling the hydrolysis of succinyl-CoA to the synthesis of either ATP or GTP and thus represents the only step of substrate-level phosphorylation in the TCA. The beta subunit provides nucleotide specificity of the enzyme and binds the substrate succinate, while the binding sites for coenzyme A and phosphate are found in the alpha subunit. In Leifsonia xyli subsp. xyli (strain CTCB07), this protein is Succinate--CoA ligase [ADP-forming] subunit beta.